A 201-amino-acid polypeptide reads, in one-letter code: 3-isopropylmalate dehydratase small subunit (201 aa).

It belongs to the LeuD family. LeuD type 1 subfamily. In terms of assembly, heterodimer of LeuC and LeuD.

The enzyme catalyses (2R,3S)-3-isopropylmalate = (2S)-2-isopropylmalate. Its pathway is amino-acid biosynthesis; L-leucine biosynthesis; L-leucine from 3-methyl-2-oxobutanoate: step 2/4. Functionally, catalyzes the isomerization between 2-isopropylmalate and 3-isopropylmalate, via the formation of 2-isopropylmaleate. In Rhizobium meliloti (strain 1021) (Ensifer meliloti), this protein is 3-isopropylmalate dehydratase small subunit.